Consider the following 318-residue polypeptide: Ankyrin repeat domain-containing protein 1 (318 aa).

Residues alanine 37 to arginine 77 adopt a coiled-coil conformation. ANK repeat units follow at residues tyrosine 151 to phenylalanine 180, leucine 184 to alanine 213, leucine 217 to alanine 246, glutamate 250 to isoleucine 279, and alanine 283 to histidine 314.

It localises to the nucleus. Functionally, may act as a nuclear transcription factor that negatively regulates the expression of cardiac genes. The protein is Ankyrin repeat domain-containing protein 1 (ankrd1) of Xenopus laevis (African clawed frog).